A 291-amino-acid polypeptide reads, in one-letter code: ATP synthase gamma chain (291 aa).

This sequence belongs to the ATPase gamma chain family. F-type ATPases have 2 components, CF(1) - the catalytic core - and CF(0) - the membrane proton channel. CF(1) has five subunits: alpha(3), beta(3), gamma(1), delta(1), epsilon(1). CF(0) has three main subunits: a, b and c.

The protein localises to the cell inner membrane. Produces ATP from ADP in the presence of a proton gradient across the membrane. The gamma chain is believed to be important in regulating ATPase activity and the flow of protons through the CF(0) complex. This chain is ATP synthase gamma chain, found in Rhodopseudomonas palustris (strain ATCC BAA-98 / CGA009).